The primary structure comprises 164 residues: Ubiquitin-fold modifier-conjugating enzyme 1 (164 aa).

Cys-116 functions as the Glycyl thioester intermediate in the catalytic mechanism.

The protein belongs to the ubiquitin-conjugating enzyme family. UFC1 subfamily.

In terms of biological role, E2-like enzyme which forms an intermediate with UFM1 via a thioester linkage. The chain is Ubiquitin-fold modifier-conjugating enzyme 1 from Drosophila persimilis (Fruit fly).